A 1116-amino-acid polypeptide reads, in one-letter code: Ubiquitin C-terminal hydrolase 12 (1116 aa).

Positions 1-10 are enriched in pro residues; sequence MTMMTPPPVD. The tract at residues 1–52 is disordered; that stretch reads MTMMTPPPVDQPEDEEMLVPNSDLVDGPAQPMEVTQPETAASTVENQPAEDP. Positions 36 to 46 are enriched in polar residues; the sequence is QPETAASTVEN. The MATH domain maps to 54 to 179; sequence TLKFTWTIPN…NDTVLVEAEV (126 aa). Positions 199–524 constitute a USP domain; sequence VGLKNQGATC…NAYMLVYIRE (326 aa). Cys-208 acts as the Nucleophile in catalysis. His-455 functions as the Proton acceptor in the catalytic mechanism.

The protein belongs to the peptidase C19 family. Interacts with SIC/RON3.

It carries out the reaction Thiol-dependent hydrolysis of ester, thioester, amide, peptide and isopeptide bonds formed by the C-terminal Gly of ubiquitin (a 76-residue protein attached to proteins as an intracellular targeting signal).. Its function is as follows. Recognizes and hydrolyzes the peptide bond at the C-terminal Gly of ubiquitin. Involved in the processing of poly-ubiquitin precursors as well as that of ubiquitinated proteins. Positive regulator of root meristem development that, together with UBP13, prevents the ubiquitination and turnover of RGFR1 induced by the RGF1 hormone peptide, thus influencing PLT1 and PLT2 expression. In Arabidopsis thaliana (Mouse-ear cress), this protein is Ubiquitin C-terminal hydrolase 12.